A 917-amino-acid polypeptide reads, in one-letter code: Alanine--tRNA ligase (917 aa).

The Zn(2+) site is built by H615, H619, C719, and H723.

Belongs to the class-II aminoacyl-tRNA synthetase family. Zn(2+) serves as cofactor.

The protein localises to the cytoplasm. It carries out the reaction tRNA(Ala) + L-alanine + ATP = L-alanyl-tRNA(Ala) + AMP + diphosphate. Its function is as follows. Catalyzes the attachment of alanine to tRNA(Ala) in a two-step reaction: alanine is first activated by ATP to form Ala-AMP and then transferred to the acceptor end of tRNA(Ala). Also edits incorrectly charged Ser-tRNA(Ala) and Gly-tRNA(Ala) via its editing domain. This Thermococcus kodakarensis (strain ATCC BAA-918 / JCM 12380 / KOD1) (Pyrococcus kodakaraensis (strain KOD1)) protein is Alanine--tRNA ligase.